Reading from the N-terminus, the 72-residue chain is MSSGCSCGSGCKCGDNCSCSMYPDMETNTTVTMIEGVAPLKMYSEGSEKSFGAEGGNGCKCGSNCKCDPCNC.

Belongs to the metallothionein superfamily. Type 15 family.

Metallothioneins have a high content of cysteine residues that bind various heavy metals. This is Metallothionein-like protein 1 from Erythranthe guttata (Yellow monkey flower).